A 207-amino-acid chain; its full sequence is LexA repressor (207 aa).

The H-T-H motif DNA-binding region spans 28–48 (VREIGEAVGLASSSTVHGHLS). Residues S130 and K168 each act as for autocatalytic cleavage activity in the active site.

Belongs to the peptidase S24 family. Homodimer.

It catalyses the reaction Hydrolysis of Ala-|-Gly bond in repressor LexA.. Functionally, represses a number of genes involved in the response to DNA damage (SOS response), including recA and lexA. In the presence of single-stranded DNA, RecA interacts with LexA causing an autocatalytic cleavage which disrupts the DNA-binding part of LexA, leading to derepression of the SOS regulon and eventually DNA repair. This chain is LexA repressor, found in Staphylococcus haemolyticus (strain JCSC1435).